The following is a 313-amino-acid chain: Catalase-related peroxidase (313 aa).

Histidine 28 is an active-site residue. Residue tyrosine 294 coordinates heme.

This sequence belongs to the catalase family. In terms of assembly, monomer. The cofactor is heme.

In terms of biological role, has an organic peroxide-dependent peroxidase activity. Exhibits strong peroxidase activity using organic hydroperoxides as cosubstrates, weak peroxidase activity using hydrogen peroxide and negligible catalase activity. May have a role in elimination of reactive oxygen species, in particular by deactivating hydroperoxides. The polypeptide is Catalase-related peroxidase (Mycolicibacterium paratuberculosis (strain ATCC BAA-968 / K-10) (Mycobacterium paratuberculosis)).